The sequence spans 40 residues: MKKLVLCVSILAVILSGVALTQLSTDSPSNIQVAERPVGG.

2 propeptides span residues 1 to 34 (MKKLVLCVSILAVILSGVALTQLSTDSPSNIQVA) and Gly40.

The protein belongs to the Phr family. Contains a predicted signal peptide cleavage site in the N-terminal region, however the propeptide is probably only subject to processing events at the ends of the mature peptide.

Its subcellular location is the secreted. The protein localises to the cytoplasm. Functionally, signaling molecule involved in the regulation of genetic competence development. Secreted during production, but the mature peptide acts intracellularly, indicating that it needs to be imported into the cell to function. Stimulates expression of the genes controlled by ComA, a transcriptional factor that regulates the development of genetic competence. Acts by inhibiting RapK, which regulates the activity of ComA. The polypeptide is RapK inhibitor (phrK) (Bacillus subtilis (strain 168)).